Reading from the N-terminus, the 473-residue chain is Trigger factor (473 aa).

In terms of domain architecture, PPIase FKBP-type spans 174 to 261 (GDIAVVSFKG…LKDLKEKELP (88 aa)). The interval 442-473 (ATKLTTKTTTKATTKKGVKTKSKPKVNKKEKN) is disordered. Positions 444–453 (KLTTKTTTKA) are enriched in low complexity. Over residues 454 to 467 (TTKKGVKTKSKPKV) the composition is skewed to basic residues.

This sequence belongs to the FKBP-type PPIase family. Tig subfamily.

It localises to the cytoplasm. The enzyme catalyses [protein]-peptidylproline (omega=180) = [protein]-peptidylproline (omega=0). In terms of biological role, involved in protein export. Acts as a chaperone by maintaining the newly synthesized protein in an open conformation. Functions as a peptidyl-prolyl cis-trans isomerase. This chain is Trigger factor, found in Prochlorococcus marinus subsp. pastoris (strain CCMP1986 / NIES-2087 / MED4).